A 285-amino-acid polypeptide reads, in one-letter code: Probable endonuclease 4 (285 aa).

H69, H109, E145, D179, H182, H216, D229, H231, and E261 together coordinate Zn(2+).

This sequence belongs to the AP endonuclease 2 family. It depends on Zn(2+) as a cofactor.

The enzyme catalyses Endonucleolytic cleavage to 5'-phosphooligonucleotide end-products.. Endonuclease IV plays a role in DNA repair. It cleaves phosphodiester bonds at apurinic or apyrimidinic (AP) sites, generating a 3'-hydroxyl group and a 5'-terminal sugar phosphate. In Shigella sonnei (strain Ss046), this protein is Probable endonuclease 4.